Consider the following 633-residue polypeptide: Carbon monoxide dehydrogenase 2 (633 aa).

Positions 44, 53, 56, 61, and 73 each coordinate [4Fe-4S] cluster. [Ni-4Fe-5S] cluster is bound by residues H264, C343, C453, C484, and C525.

The protein belongs to the Ni-containing carbon monoxide dehydrogenase family. Homodimer. [4Fe-4S] cluster serves as cofactor. Requires [Ni-4Fe-5S] cluster as cofactor.

It catalyses the reaction CO + 2 oxidized [2Fe-2S]-[ferredoxin] + H2O = 2 reduced [2Fe-2S]-[ferredoxin] + CO2 + 2 H(+). Its function is as follows. CODH oxidizes carbon monoxide coupled, via CooF, to the reduction of a hydrogen cation by a hydrogenase (possibly CooH). The chain is Carbon monoxide dehydrogenase 2 (cooS2) from Methanosarcina acetivorans (strain ATCC 35395 / DSM 2834 / JCM 12185 / C2A).